The sequence spans 132 residues: ATP synthase epsilon chain, chloroplastic (132 aa).

Residue Thr2 is modified to N-acetylthreonine.

It belongs to the ATPase epsilon chain family. In terms of assembly, F-type ATPases have 2 components, CF(1) - the catalytic core - and CF(0) - the membrane proton channel. CF(1) has five subunits: alpha(3), beta(3), gamma(1), delta(1), epsilon(1). CF(0) has three main subunits: a, b and c.

Its subcellular location is the plastid. The protein resides in the chloroplast thylakoid membrane. Its function is as follows. Produces ATP from ADP in the presence of a proton gradient across the membrane. The chain is ATP synthase epsilon chain, chloroplastic from Arabidopsis thaliana (Mouse-ear cress).